The chain runs to 292 residues: Putative sugar lactone lactonase YvrE (292 aa).

A divalent metal cation is bound by residues Glu15, Asn146, and Asp196.

This sequence belongs to the SMP-30/CGR1 family. Requires a divalent metal cation as cofactor.

It is found in the cytoplasm. This chain is Putative sugar lactone lactonase YvrE (yvrE), found in Bacillus subtilis (strain 168).